Reading from the N-terminus, the 351-residue chain is High-affinity nickel transport protein (351 aa).

Topologically, residues 1–19 (MFQLLAGVRMNSTGRPRAK) are cytoplasmic. The chain crosses the membrane as a helical span at residues 20-40 (IILLYALLIAFNIGAWLCALA). At 41-51 (AFRDHPVLLGT) the chain is on the periplasmic side. Residues 52–72 (ALLAYGLGLRHAVDADHLAAI) form a helical membrane-spanning segment. Residues 73-94 (DNVTRKLMQDGRRPITAGLWFS) are Cytoplasmic-facing. A helical transmembrane segment spans residues 95–115 (LGHSSVVVLASVLIAVMATTL). At 116–128 (QERLDAFHEVGSV) the chain is on the periplasmic side. A helical membrane pass occupies residues 129–149 (IGTLASALFLFAIAAINLVIL). Residues 150–199 (RSAYRAFRRVRRGGIYVEEDFDLLFGNRGFLARIFRPLFRFITRSWHMYP) lie on the Cytoplasmic side of the membrane. A helical transmembrane segment spans residues 200-220 (LGMLFALGFDTATEVALLGIS). The Periplasmic portion of the chain corresponds to 221–243 (TMEASRGVPIWSILVFPALFTAG). The helical transmembrane segment at 244-264 (MALIDTIDSILMCGAYAWAYA) threads the bilayer. Residues 265-269 (KPVRK) lie on the Cytoplasmic side of the membrane. A helical membrane pass occupies residues 270-290 (LYYNMTITFVSAIVALIVGGI). Topologically, residues 291–316 (ETLGLLADKFMLKGVFWNAVGALNEN) are periplasmic. The chain crosses the membrane as a helical span at residues 317–337 (FCQLGFVIIGIFTVCWVVSIV). The Cytoplasmic portion of the chain corresponds to 338-351 (VYRLRRYDDSEVRA).

It belongs to the NiCoT transporter (TC 2.A.52) family.

The protein resides in the cell inner membrane. Its function is as follows. High-affinity nickel transporter responsible for nickel uptake. Necessary for high levels of activity of hydrogenase and urease. Does not transport cobalt. This is High-affinity nickel transport protein (hoxN) from Cupriavidus necator (strain ATCC 17699 / DSM 428 / KCTC 22496 / NCIMB 10442 / H16 / Stanier 337) (Ralstonia eutropha).